The primary structure comprises 195 residues: Protein GrpE (195 aa).

The interval 1–30 (MSEQEKVEQEEISAELETQNEQEKPMEETE) is disordered. Positions 10–20 (EEISAELETQN) are enriched in acidic residues.

Belongs to the GrpE family. Homodimer.

It is found in the cytoplasm. Functionally, participates actively in the response to hyperosmotic and heat shock by preventing the aggregation of stress-denatured proteins, in association with DnaK and GrpE. It is the nucleotide exchange factor for DnaK and may function as a thermosensor. Unfolded proteins bind initially to DnaJ; upon interaction with the DnaJ-bound protein, DnaK hydrolyzes its bound ATP, resulting in the formation of a stable complex. GrpE releases ADP from DnaK; ATP binding to DnaK triggers the release of the substrate protein, thus completing the reaction cycle. Several rounds of ATP-dependent interactions between DnaJ, DnaK and GrpE are required for fully efficient folding. This is Protein GrpE from Histophilus somni (strain 2336) (Haemophilus somnus).